Consider the following 448-residue polypeptide: Exodeoxyribonuclease 7 large subunit (448 aa).

This sequence belongs to the XseA family. Heterooligomer composed of large and small subunits.

The protein localises to the cytoplasm. It catalyses the reaction Exonucleolytic cleavage in either 5'- to 3'- or 3'- to 5'-direction to yield nucleoside 5'-phosphates.. In terms of biological role, bidirectionally degrades single-stranded DNA into large acid-insoluble oligonucleotides, which are then degraded further into small acid-soluble oligonucleotides. The polypeptide is Exodeoxyribonuclease 7 large subunit (Alcanivorax borkumensis (strain ATCC 700651 / DSM 11573 / NCIMB 13689 / SK2)).